The following is a 745-amino-acid chain: Poly(A) polymerase alpha (745 aa).

Positions 1–17 (MPFPVTTQGSQQTQPPQ) are enriched in low complexity. The segment at 1–22 (MPFPVTTQGSQQTQPPQKHYGI) is disordered. Phosphoserine is present on residues Ser10 and Ser24. ATP contacts are provided by residues 100–102 (FGS), Thr109, 113–115 (DID), Asp167, Lys228, Tyr237, and 246–247 (GV). Mg(2+) is bound by residues Asp113, Asp115, and Asp167. Residues Lys444, Lys445, Lys506, and Lys507 each participate in a glycyl lysine isopeptide (Lys-Gly) (interchain with G-Cter in SUMO) cross-link. Residues 490–507 (RKQLHQLLPNHVLQKKKK) carry the Nuclear localization signal 1 motif. Residues 508–643 (HSTEGVKLTA…TSGNAATKIP (136 aa)) are ser/Thr-rich. Low complexity predominate over residues 523–534 (LDLSMDSDNSMS). Disordered regions lie at residues 523–565 (LDLS…AVTA) and 577–704 (SVPQ…SETI). Residues 535 to 557 (VPSPTSATKTSPLNSSGSSQGRN) are compositionally biased toward polar residues. Residues Ser537 and Ser558 each carry the phosphoserine modification. 2 stretches are compositionally biased toward low complexity: residues 583 to 594 (SSESSGGTSSES) and 611 to 640 (TVSRVVSSTRLVNPPPRSSGNAATSGNAAT). An N6-acetyllysine mark is found at Lys641 and Lys650. A Nuclear localization signal 2 motif is present at residues 650–665 (KRTSSPHKEESPKKTK). Basic and acidic residues-rich tracts occupy residues 655 to 666 (PHKEESPKKTKT) and 682 to 692 (GHDKTEAKEQL). Residues 677–745 (CLALSGHDKT…KNSIKLRLNR (69 aa)) form a required for interaction with NUDT21 region. Low complexity predominate over residues 694–704 (TETSTTQSETI). Position 736 is an N6-acetyllysine; alternate (Lys736). Lys736 participates in a covalent cross-link: Glycyl lysine isopeptide (Lys-Gly) (interchain with G-Cter in SUMO); alternate. Ser738 is subject to Phosphoserine. Residue Lys740 is modified to N6-acetyllysine; alternate. Lys740 participates in a covalent cross-link: Glycyl lysine isopeptide (Lys-Gly) (interchain with G-Cter in SUMO); alternate.

It belongs to the poly(A) polymerase family. In terms of assembly, monomer. Found in a complex with CPSF1, FIP1L1 and PAPOLA. Interacts with AHCYL1 and FIP1L1; the interaction with AHCYL1 seems to increase interaction with FIP1L1. Interacts with NUDT21; the interaction is diminished by acetylation. Interacts with KPNB1; the interaction promotes PAP nuclear import and is inhibited by acetylation of PAP. Mg(2+) is required as a cofactor. It depends on Mn(2+) as a cofactor. Polysumoylated. Varying sumoylation depending on tissue- and cell-type. Highly sumoylated in bladder and NIH 3T3 cells. Sumoylation is required for nuclear localization and enhances PAP stability. Desumoylated by SENP1. Inhibits polymerase activity. Post-translationally, hyperphosphorylation on multiple CDK2 consensus and non-consensus sites in the C-terminal Ser/Thr-rich region represses PAP activity in late M-phase. Phosphorylation/dephosphorylation may regulate the interaction between PAP and CPSF. In terms of processing, acetylated in the C-terminus. Acetylation decreases interaction with NUDT21 and KPNB1, and inhibits nuclear localization through inhibiting binding to the importin alpha/beta complex.

Its subcellular location is the cytoplasm. The protein resides in the nucleus. The enzyme catalyses RNA(n) + ATP = RNA(n)-3'-adenine ribonucleotide + diphosphate. In terms of biological role, polymerase that creates the 3'-poly(A) tail of mRNA's. Also required for the endoribonucleolytic cleavage reaction at some polyadenylation sites. May acquire specificity through interaction with a cleavage and polyadenylation specificity factor (CPSF) at its C-terminus. The sequence is that of Poly(A) polymerase alpha (PAPOLA) from Homo sapiens (Human).